The following is a 226-amino-acid chain: Cytidylate kinase (226 aa).

10 to 18 (GPAGAGKST) is an ATP binding site.

It belongs to the cytidylate kinase family. Type 1 subfamily.

It localises to the cytoplasm. It carries out the reaction CMP + ATP = CDP + ADP. The enzyme catalyses dCMP + ATP = dCDP + ADP. The sequence is that of Cytidylate kinase from Caldicellulosiruptor bescii (strain ATCC BAA-1888 / DSM 6725 / KCTC 15123 / Z-1320) (Anaerocellum thermophilum).